The chain runs to 279 residues: Protein gustavus (279 aa).

The B30.2/SPRY domain occupies 36-233 (PARIDILLDM…ITMRYIGGLD (198 aa)). The 46-residue stretch at 234–279 (PEPLPLMDLCRRTIRQKIGRTNLEEHIQQLQLPLSMKTYLLYKNRR) folds into the SOCS box domain. The interval 236 to 279 (PLPLMDLCRRTIRQKIGRTNLEEHIQQLQLPLSMKTYLLYKNRR) is involved in binding to the Elongin BC complex.

It belongs to the SPSB family. Interacts (via B30.2/SPRY domain) with vas; this interaction may be necessary for the transport of vas to the posterior pole of the oocyte. Interacts with Cul-5. May associate with the Elongin BC complex composed of Elongin-B and Elongin-C. As to expression, expressed in ovaries, primarily in nurse cells and oocytes (at protein level).

The protein localises to the cytoplasm. Its subcellular location is the nucleus. In terms of biological role, involved in the localization of vas to the posterior pole of the oocyte. Required maternally in the germ line for efficient primordial germ cell formation. The chain is Protein gustavus (gus) from Drosophila melanogaster (Fruit fly).